The following is an 89-amino-acid chain: Co-chaperonin GroES (89 aa).

Belongs to the GroES chaperonin family. In terms of assembly, heptamer of 7 subunits arranged in a ring. Interacts with the chaperonin GroEL.

Its subcellular location is the cytoplasm. Functionally, together with the chaperonin GroEL, plays an essential role in assisting protein folding. The GroEL-GroES system forms a nano-cage that allows encapsulation of the non-native substrate proteins and provides a physical environment optimized to promote and accelerate protein folding. GroES binds to the apical surface of the GroEL ring, thereby capping the opening of the GroEL channel. The chain is Co-chaperonin GroES from Porphyromonas gingivalis (strain ATCC 33277 / DSM 20709 / CIP 103683 / JCM 12257 / NCTC 11834 / 2561).